We begin with the raw amino-acid sequence, 270 residues long: uncharacterized protein (270 aa).

The protein to T.pallidum TP_0127, TP_0315 and TP_0618.

This is an uncharacterized protein from Treponema pallidum (strain Nichols).